Here is a 231-residue protein sequence, read N- to C-terminus: NADH-ubiquinone oxidoreductase chain 4 (231 aa).

6 helical membrane passes run 1 to 21, 34 to 54, 61 to 80, 84 to 106, 128 to 148, and 169 to 189; these read PIAGSMVLAAILLKLGGYGII, LFLPFIVLALWGAILANLTCL, SLIAYSSISHMGLVVAAIII, WGLSGAMALMIAHGFTSSALFCL, ILPMATTWWLLANLMNIATPP, and TIILLGLSMLITASYSLHMFL.

It belongs to the complex I subunit 4 family.

The protein resides in the mitochondrion membrane. The catalysed reaction is a ubiquinone + NADH + 5 H(+)(in) = a ubiquinol + NAD(+) + 4 H(+)(out). Core subunit of the mitochondrial membrane respiratory chain NADH dehydrogenase (Complex I) that is believed to belong to the minimal assembly required for catalysis. Complex I functions in the transfer of electrons from NADH to the respiratory chain. The immediate electron acceptor for the enzyme is believed to be ubiquinone. In Metlapilcoatlus nummifer (Mexican jumping pitviper), this protein is NADH-ubiquinone oxidoreductase chain 4 (MT-ND4).